A 274-amino-acid chain; its full sequence is 4-diphosphocytidyl-2-C-methyl-D-erythritol kinase (274 aa).

K8 is an active-site residue. Residue P94–A104 coordinates ATP. D136 is an active-site residue.

Belongs to the GHMP kinase family. IspE subfamily.

The enzyme catalyses 4-CDP-2-C-methyl-D-erythritol + ATP = 4-CDP-2-C-methyl-D-erythritol 2-phosphate + ADP + H(+). The protein operates within isoprenoid biosynthesis; isopentenyl diphosphate biosynthesis via DXP pathway; isopentenyl diphosphate from 1-deoxy-D-xylulose 5-phosphate: step 3/6. In terms of biological role, catalyzes the phosphorylation of the position 2 hydroxy group of 4-diphosphocytidyl-2C-methyl-D-erythritol. The chain is 4-diphosphocytidyl-2-C-methyl-D-erythritol kinase from Bacteroides fragilis (strain YCH46).